A 515-amino-acid chain; its full sequence is Methionine--tRNA ligase (515 aa).

Residues A13–H23 carry the 'HIGH' region motif. The 'KMSKS' region signature appears at K300 to S304. K303 is an ATP binding site.

The protein belongs to the class-I aminoacyl-tRNA synthetase family. MetG type 2B subfamily. In terms of assembly, monomer.

It localises to the cytoplasm. The catalysed reaction is tRNA(Met) + L-methionine + ATP = L-methionyl-tRNA(Met) + AMP + diphosphate. Functionally, is required not only for elongation of protein synthesis but also for the initiation of all mRNA translation through initiator tRNA(fMet) aminoacylation. This is Methionine--tRNA ligase from Brucella melitensis biotype 1 (strain ATCC 23456 / CCUG 17765 / NCTC 10094 / 16M).